A 216-amino-acid chain; its full sequence is Large ribosomal subunit protein uL4 (216 aa).

Positions Lys51–Lys78 are disordered. The span at Tyr64 to Asp76 shows a compositional bias: basic residues.

This sequence belongs to the universal ribosomal protein uL4 family. Part of the 50S ribosomal subunit.

One of the primary rRNA binding proteins, this protein initially binds near the 5'-end of the 23S rRNA. It is important during the early stages of 50S assembly. It makes multiple contacts with different domains of the 23S rRNA in the assembled 50S subunit and ribosome. Functionally, forms part of the polypeptide exit tunnel. This Treponema pallidum (strain Nichols) protein is Large ribosomal subunit protein uL4.